The chain runs to 253 residues: Ubiquinone biosynthesis O-methyltransferase (253 aa).

Positions 47, 78, 99, and 141 each coordinate S-adenosyl-L-methionine.

Belongs to the methyltransferase superfamily. UbiG/COQ3 family.

The catalysed reaction is a 3-demethylubiquinol + S-adenosyl-L-methionine = a ubiquinol + S-adenosyl-L-homocysteine + H(+). The enzyme catalyses a 3-(all-trans-polyprenyl)benzene-1,2-diol + S-adenosyl-L-methionine = a 2-methoxy-6-(all-trans-polyprenyl)phenol + S-adenosyl-L-homocysteine + H(+). It participates in cofactor biosynthesis; ubiquinone biosynthesis. O-methyltransferase that catalyzes the 2 O-methylation steps in the ubiquinone biosynthetic pathway. This chain is Ubiquinone biosynthesis O-methyltransferase, found in Rhodopseudomonas palustris (strain BisB5).